The chain runs to 339 residues: Trace amine-associated receptor 2 (339 aa).

The Extracellular segment spans residues 1-36; the sequence is MASFEAQQETFDCSEYGNGSCPENERSLGVRAAMYS. N-linked (GlcNAc...) asparagine glycosylation is present at asparagine 18. 2 cysteine pairs are disulfide-bonded: cysteine 21/cysteine 185 and cysteine 104/cysteine 189. A helical transmembrane segment spans residues 37 to 57; it reads LMACAIFITIFGNLAMIISIS. At 58–67 the chain is on the cytoplasmic side; it reads YFKQLHTPTN. A helical membrane pass occupies residues 68–88; the sequence is LLILSMAVTDFLLGFTIMPYS. The Extracellular portion of the chain corresponds to 89 to 106; it reads MVRSVENCWYFGLTFCKI. The helical transmembrane segment at 107 to 127 threads the bilayer; sequence HYSFDLMLSITSIFHLCSVAV. At 128–150 the chain is on the cytoplasmic side; it reads DRFYAICHPLHYCTKMTIPVVRR. Residues 151–171 traverse the membrane as a helical segment; the sequence is LLLVCWSVPGAFAFGVVFSEA. The Extracellular portion of the chain corresponds to 172 to 195; it reads YADGIEGYDILVACSSSCPVMFNK. A helical membrane pass occupies residues 196–216; sequence LWGTTLFVAGFFTPSSMMVGI. The Cytoplasmic portion of the chain corresponds to 217–251; it reads YGKIFAVSKKHARVIDNLPENQNNQMRKDKKAAKT. The chain crosses the membrane as a helical span at residues 252 to 272; it reads LGIVMGVFLLCWFPCFFTILL. The Extracellular portion of the chain corresponds to 273–287; sequence DPFLNFSTPAVLFDA. Asparagine 277 carries an N-linked (GlcNAc...) asparagine glycan. Residues 288–310 form a helical membrane-spanning segment; it reads LTWFGYFNSTCNPLIYGFFYPWF. Residues 311–339 are Cytoplasmic-facing; that stretch reads RRALKYILLGKIFSSHFHNTNLFTQKETE.

This sequence belongs to the G-protein coupled receptor 1 family. As to expression, mainly expressed in neurons of the olfactory epithelium. Also present in the limbic brain areas receiving projection from the olfactory system and several brain regions, including the hippocampus, cerebellum, cortex, raphe nuclei, hypothalamus and habenula.

The protein resides in the cell membrane. In terms of biological role, orphan olfactory receptor specific for trace amines. Trace amine compounds are enriched in animal body fluids and act on trace amine-associated receptors (TAARs) to elicit both intraspecific and interspecific innate behaviors. Ligand-binding causes a conformation change that triggers signaling via the G(s)-class of G-proteins which activate adenylate cyclase. May also be required to provide olfactory input into limbic brain areas to regulate emotional behaviors likely via modulation of the dopamine system. This is Trace amine-associated receptor 2 from Mus musculus (Mouse).